Consider the following 1171-residue polypeptide: APC-related protein 1 (1171 aa).

Residues 1-54 (MSSSSSDENETTIHSSSNPGSSGIYSQLKAGSSKRPSVRHDVSDAEDDEEPYEG) are disordered. The interval 1 to 481 (MSSSSSDENE…LSLRATRASP (481 aa)) is required for interaction with bar-1 and hmp-2. Over residues 15-26 (SSSNPGSSGIYS) the composition is skewed to low complexity. Residues 312–356 (NCLKVLANILSPDARFTTLVDSASGILKYVSQYLATNSSHLELRS) form an ARM repeat. 6 disordered regions span residues 587 to 617 (PVDD…NPGS), 662 to 699 (HPED…GTTV), 720 to 741 (RKTS…LEVE), 767 to 822 (EEMP…EMTT), 837 to 936 (PRSR…TMRI), and 995 to 1030 (SSGS…SSLP). The tract at residues 591–1171 (DLDIPTSTVM…NPKQMLVTIV (581 aa)) is required for interaction with pry-1. 2 stretches are compositionally biased toward polar residues: residues 595 to 617 (PTST…NPGS) and 666 to 697 (NQMT…SDGT). Polar residues predominate over residues 788-799 (FSPSQKTTSSPA). Basic and acidic residues predominate over residues 857-874 (EPDRSSHSKNEEADRRDA). 2 stretches are compositionally biased toward polar residues: residues 890–913 (RGSS…SSED) and 1002–1028 (LQKA…SVSS).

This sequence belongs to the adenomatous polyposis coli (APC) family. Interacts (via N-terminus) with bar-1 and hmp-2; the interaction with hmp-2 is relatively weak. Interacts (via C-terminus) with pry-1 (via N-terminus). Probably associates with bar-1, gsk-3, pry-1 in a complex.

It is found in the cell junction. The protein localises to the adherens junction. Its subcellular location is the cytoplasm. It localises to the nucleus. Its function is as follows. Has a role in endoderm cell specification and pharyngeal development. Required for the migration of epithelial cells, organization of the anterior seam cells and ceh-13 expression during embryo morphogenesis. Prevents hyperactivation of the Wnt signaling pathway during endoderm development, probably by preventing hmp-2 nuclear translocation. During larval development, apr-1 is required for expression of lin-39 in P3-8.p. Shown to negatively regulate Wnt signaling in vulval precursor cells. Has a role in cell division by establishing the polarity of the mother cell which forms the asymmetries of the daughter nuclei. Thought to regulate export of wrm-1 from the nucleus possibly as part of a complex involving pry-1. The polypeptide is APC-related protein 1 (Caenorhabditis briggsae).